Consider the following 889-residue polypeptide: Alanine--tRNA ligase (889 aa).

4 residues coordinate Zn(2+): H569, H573, C671, and H675.

The protein belongs to the class-II aminoacyl-tRNA synthetase family. Requires Zn(2+) as cofactor.

Its subcellular location is the cytoplasm. The enzyme catalyses tRNA(Ala) + L-alanine + ATP = L-alanyl-tRNA(Ala) + AMP + diphosphate. In terms of biological role, catalyzes the attachment of alanine to tRNA(Ala) in a two-step reaction: alanine is first activated by ATP to form Ala-AMP and then transferred to the acceptor end of tRNA(Ala). Also edits incorrectly charged Ser-tRNA(Ala) and Gly-tRNA(Ala) via its editing domain. The sequence is that of Alanine--tRNA ligase from Parasynechococcus marenigrum (strain WH8102).